Reading from the N-terminus, the 382-residue chain is MNLKEKTRALFAEIFSYPATHTIQAPGRVNLIGEHTDYNDGFVLPCAIDYQTVISCAPRDDRTVRVIAADYDNQVEEFSLDAPIVTHDSQQWSNYVRGVVKHLQQRNNAFGGVDMVISGNVPQGAGLSSSASLEVAVGTVFQQLYHLPLDGAQIALNGQEAENQFVGCNCGIMDQLISALGKKDHALLIDCRTLGAKAVSMPKGVAVVIINSNFKRTLVGSEYNTRREQCETGARFFQQPALRDVSLEAFNAVASELDPVVAKRVRHVLSENARTVEAASALEKGDLQRMGQLMAESHASMRDDFEITVPQIDTLVDIVKATIGDQGGVRMTGGGFGGCVVALIPEDLVPAVRQAVAQQYEAKTGIKETFYVCKPSQGAGQC.

34 to 37 (EHTD) lines the substrate pocket. 124-130 (GAGLSSS) lines the ATP pocket. The Mg(2+) site is built by S130 and E162. Residue D174 is the Proton acceptor of the active site. Residue Y223 coordinates substrate.

It belongs to the GHMP kinase family. GalK subfamily.

It is found in the cytoplasm. It carries out the reaction alpha-D-galactose + ATP = alpha-D-galactose 1-phosphate + ADP + H(+). The protein operates within carbohydrate metabolism; galactose metabolism. Its function is as follows. Catalyzes the transfer of the gamma-phosphate of ATP to D-galactose to form alpha-D-galactose-1-phosphate (Gal-1-P). This Salmonella choleraesuis (strain SC-B67) protein is Galactokinase.